A 372-amino-acid chain; its full sequence is Heterogeneous nuclear rnp K-like protein 2 (372 aa).

Over residues 1 to 23 (MSDINDPNSISLPVGSSCTSRGA) the composition is skewed to polar residues. The tract at residues 1–49 (MSDINDPNSISLPVGSSCTSRGASTETFTTSRSTTLFSSQQESKDEGNV) is disordered. Residues 24-39 (STETFTTSRSTTLFSS) are compositionally biased toward low complexity. KH domains follow at residues 59 to 123 (TINH…LGQI), 167 to 232 (IGTS…LLQI), and 283 to 354 (EFKA…ESML).

It belongs to the HEK2 family. In terms of assembly, binds RNA.

Its subcellular location is the cytoplasm. It is found in the P-body. It localises to the nucleus. The protein resides in the chromosome. The protein localises to the telomere. RNA-binding protein involved in the correct localization of transcripts in the cell. RNA localization is a widespread mechanism for achieving localized protein synthesis. Involved in structural and functional organization of telomeric chromatin and regulates silencing at the HMR locus. This Zygosaccharomyces rouxii (strain ATCC 2623 / CBS 732 / NBRC 1130 / NCYC 568 / NRRL Y-229) protein is Heterogeneous nuclear rnp K-like protein 2 (HEK2).